Here is a 291-residue protein sequence, read N- to C-terminus: MKRIALFLITNLAVMAVLGITASLLGFNRYYAATGLDLGALLGFAMVMGFGGAFISLLMSKPMAKWSTGAVVINDSPEPMHRWLVDTVARFSKRAGIEMPEVALYEGEPNAFATGAFKNSALVAVSTGLLQSMSRDEVEAVIGHEVAHVANGDMVTMTLIQGVMNTFVVFLSRAIGYFIDRVVLKNDREGPGIGYMVTTVVLDLLLGLVAAMIVAWFSRQREFRADAGAAQLMGSRVPMQRALARLGGIDPGELPQSVATMGINGRPSGIMALFSSHPPIEDRIRALQQSA.

The next 2 helical transmembrane spans lie at 4 to 24 (IALFLITNLAVMAVLGITASL) and 38 to 58 (LGALLGFAMVMGFGGAFISLL). Zn(2+) is bound at residue H144. E145 is a catalytic residue. Position 148 (H148) interacts with Zn(2+). 2 consecutive transmembrane segments (helical) span residues 159–179 (LIQGVMNTFVVFLSRAIGYFI) and 197–217 (VTTVVLDLLLGLVAAMIVAWF). A Zn(2+)-binding site is contributed by E222.

It belongs to the peptidase M48B family. Requires Zn(2+) as cofactor.

It is found in the cell inner membrane. The protein is Protease HtpX homolog of Leptothrix cholodnii (strain ATCC 51168 / LMG 8142 / SP-6) (Leptothrix discophora (strain SP-6)).